A 387-amino-acid chain; its full sequence is S-adenosylmethionine synthase (387 aa).

A Mg(2+)-binding site is contributed by Glu-8. His-14 contributes to the ATP binding site. A K(+)-binding site is contributed by Glu-42. Positions 55 and 98 each coordinate L-methionine. ATP-binding positions include 166–168 (DGK), 234–237 (SGRF), Asp-245, 251–252 (RK), Ala-268, Lys-272, and Lys-276. Asp-245 contacts L-methionine. Lys-276 contacts L-methionine.

This sequence belongs to the AdoMet synthase family. In terms of assembly, homotetramer. The cofactor is Mn(2+). Requires Mg(2+) as cofactor. Co(2+) is required as a cofactor. K(+) serves as cofactor.

Its subcellular location is the cytoplasm. It catalyses the reaction L-methionine + ATP + H2O = S-adenosyl-L-methionine + phosphate + diphosphate. Its pathway is amino-acid biosynthesis; S-adenosyl-L-methionine biosynthesis; S-adenosyl-L-methionine from L-methionine: step 1/1. Catalyzes the formation of S-adenosylmethionine from methionine and ATP. The reaction comprises two steps that are both catalyzed by the same enzyme: formation of S-adenosylmethionine (AdoMet) and triphosphate, and subsequent hydrolysis of the triphosphate. The polypeptide is S-adenosylmethionine synthase (METK-1) (Ostreococcus lucimarinus (strain CCE9901)).